A 147-amino-acid polypeptide reads, in one-letter code: Ubiquitin-conjugating enzyme E2 D2 (147 aa).

In terms of domain architecture, UBC core spans 1–147; the sequence is MALKRIHKEL…AREWTQKYAM (147 aa). C85 serves as the catalytic Glycyl thioester intermediate.

The protein belongs to the ubiquitin-conjugating enzyme family. In terms of assembly, interacts with SCF (SKP1-CUL1-F-box protein) E3 ubiquitin ligase complex. Interacts with CNOT4 (via RING domain). Interacts with E3 ubiquitin-protein ligases CBLC, PJA1 and PJA2. Interacts with PDZRN3. Interacts with PPP1R11. Interacts with E3 ubiquitin-protein ligase PHF7; the interaction inhibits cleavage of PHF7 and promotes association of the complex with the nucleosome core particle.

It carries out the reaction S-ubiquitinyl-[E1 ubiquitin-activating enzyme]-L-cysteine + [E2 ubiquitin-conjugating enzyme]-L-cysteine = [E1 ubiquitin-activating enzyme]-L-cysteine + S-ubiquitinyl-[E2 ubiquitin-conjugating enzyme]-L-cysteine.. The catalysed reaction is S-ubiquitinyl-[E1 ubiquitin-activating enzyme]-L-cysteine + [acceptor protein]-L-lysine = [E1 ubiquitin-activating enzyme]-L-cysteine + N(6)-monoubiquitinyl-[acceptor protein]-L-lysine.. It functions in the pathway protein modification; protein ubiquitination. In terms of biological role, accepts ubiquitin from the E1 complex and catalyzes its covalent attachment to other proteins. In vitro catalyzes 'Lys-48'-linked polyubiquitination. Mediates the selective degradation of short-lived and abnormal proteins. Functions in the E6/E6-AP-induced ubiquitination of p53/TP53. Mediates ubiquitination of PEX5 and SQSTM1 and autoubiquitination of STUB1 and TRAF6. Involved in the signal-induced conjugation and subsequent degradation of NFKBIA, FBXW2-mediated GCM1 ubiquitination and degradation, MDM2-dependent degradation of p53/TP53 and the activation of MAVS in the mitochondria by RIGI in response to viral infection. Essential for viral activation of IRF3. This is Ubiquitin-conjugating enzyme E2 D2 (UBE2D2) from Bos taurus (Bovine).